Consider the following 125-residue polypeptide: Glycine cleavage system H protein (125 aa).

The Lipoyl-binding domain maps to 22–103; that stretch reads VFVVGITENA…AFTAWIFKIK (82 aa). Residue lysine 63 is modified to N6-lipoyllysine.

The protein belongs to the GcvH family. The glycine cleavage system is composed of four proteins: P, T, L and H. The cofactor is (R)-lipoate.

Its function is as follows. The glycine cleavage system catalyzes the degradation of glycine. The H protein shuttles the methylamine group of glycine from the P protein to the T protein. This is Glycine cleavage system H protein from Bordetella avium (strain 197N).